A 303-amino-acid chain; its full sequence is Caspase-7 (303 aa).

Met-1 carries the post-translational modification N-acetylmethionine. Positions Met-1 to Asp-23 are excised as a propeptide. The tract at residues Met-1–Pro-26 is disordered. A compositionally biased stretch (basic and acidic residues) spans Glu-10 to Pro-26. Ser-30 carries the post-translational modification Phosphoserine. The exosite stretch occupies residues Lys-38–Arg-41. The interval Lys-76 to Arg-87 is loop L1. His-144 is a catalytic residue. The residue at position 173 (Thr-173) is a Phosphothreonine. The active site involves Cys-186. Positions Arg-187–Gln-196 are loop L2. The propeptide occupies Ser-199–Asp-206. The tract at residues Val-226–Gly-238 is loop L3. The residue at position 239 (Ser-239) is a Phosphoserine. The tract at residues Glu-274–Ile-288 is loop L4.

The protein belongs to the peptidase C14A family. In terms of assembly, heterotetramer that consists of two anti-parallel arranged heterodimers, each one formed by a 20 kDa (p20) and a 11 kDa (p11) subunit. Interacts with XIAP (via its second BIR domain); inhibiting CASP7 activity. Interacts with BIRC6/bruce. Interacts with ATXN3 (short isoform 1). Interacts with HSPA5. Cleavage by different proteases, such as granzyme B (GZMB), caspase-1 (CASP1), caspase-8 (CASP8) or caspase-9 (CASP9) generate the two active subunits. Its involvement in different programmed cell death processes is probably specified by the protease that activates CASP7. Cleaved and activated by initiator caspases (CASP8 and/or CASP9), leading to execution phase of apoptosis. Cleavage and maturation by GZMB regulates granzyme-mediated programmed cell death. Cleaved and activated by CASP1 in response to bacterial infection. Propeptide domains can also be cleaved efficiently by CASP3. Active heterodimers between the small subunit of caspase-7 and the large subunit of CASP3, and vice versa, also occur. Also cleaved at the N-terminus at alternative sites by CAPN1, leading to its activation. In terms of processing, phosphorylation at Ser-30 and Ser-239 by PAK2 inhibits its activity. Phosphorylation at Ser-30 prevents cleavage and activation by initiator caspase CASP9, while phosphorylation at Ser-239 prevents thiol protease activity by preventing substrate-binding. Post-translationally, ubiquitinated by BIRC6; this activity is inhibited by DIABLO/SMAC. As to expression, highly expressed in heart, lung, liver and kidney. Low levels in spleen, skeletal muscle and testis. No expression in the brain.

It localises to the cytoplasm. The protein resides in the cytosol. The protein localises to the nucleus. It is found in the secreted. Its subcellular location is the extracellular space. It carries out the reaction Strict requirement for an Asp residue at position P1 and has a preferred cleavage sequence of Asp-Glu-Val-Asp-|-.. Its activity is regulated as follows. During activation, the N-terminal disordered prodomain is removed by cleavage. Concomitantly, double cleavage gives rise to a large Caspase-7 subunit p20 and a small Caspase-7 subunit p11. The two large and two small subunits then assemble to form the active CASP7 complex. Can be cleaved and activated by different caspases, depending on the context. Cleaved and activated by initiator caspases (CASP8 and/or CASP9), leading to execution phase of apoptosis. Cleavage and maturation by GZMB regulates granzyme-mediated programmed cell death. Cleavage and maturation by CASP1 regulates pyroptosis. Inhibited by XIAP, which directly binds to the active site pocket and obstructs substrate entry. Phosphorylation at Ser-30 and Ser-239 by PAK2 inhibits its activity. Inhibited by BIRC6; following inhibition of BIRC6-caspase binding by DIABLO/SMAC, BIRC6 is subjected to caspase cleavage, leading to an increase in active caspases. In terms of biological role, thiol protease involved in different programmed cell death processes, such as apoptosis, pyroptosis or granzyme-mediated programmed cell death, by proteolytically cleaving target proteins. Has a marked preference for Asp-Glu-Val-Asp (DEVD) consensus sequences, with some plasticity for alternate non-canonical sequences. Its involvement in the different programmed cell death processes is probably determined by upstream proteases that activate CASP7. Acts as an effector caspase involved in the execution phase of apoptosis: following cleavage and activation by initiator caspases (CASP8 and/or CASP9), mediates execution of apoptosis by catalyzing cleavage of proteins, such as CLSPN, PARP1, PTGES3 and YY1. Compared to CASP3, acts as a minor executioner caspase and cleaves a limited set of target proteins. Acts as a key regulator of the inflammatory response in response to bacterial infection by catalyzing cleavage and activation of the sphingomyelin phosphodiesterase SMPD1 in the extracellular milieu, thereby promoting membrane repair. Regulates pyroptosis in intestinal epithelial cells: cleaved and activated by CASP1 in response to S.typhimurium infection, promoting its secretion to the extracellular milieu, where it catalyzes activation of SMPD1, generating ceramides that repair membranes and counteract the action of gasdermin-D (GSDMD) pores. Regulates granzyme-mediated programmed cell death in hepatocytes: cleaved and activated by granzyme B (GZMB) in response to bacterial infection, promoting its secretion to the extracellular milieu, where it catalyzes activation of SMPD1, generating ceramides that repair membranes and counteract the action of perforin (PRF1) pores. Following cleavage by CASP1 in response to inflammasome activation, catalyzes processing and inactivation of PARP1, alleviating the transcription repressor activity of PARP1. Acts as an inhibitor of type I interferon production during virus-induced apoptosis by mediating cleavage of antiviral proteins CGAS, IRF3 and MAVS, thereby preventing cytokine overproduction. Cleaves and activates sterol regulatory element binding proteins (SREBPs). Cleaves phospholipid scramblase proteins XKR4, XKR8 and XKR9. Cleaves BIRC6 following inhibition of BIRC6-caspase binding by DIABLO/SMAC. The polypeptide is Caspase-7 (Mus musculus (Mouse)).